A 382-amino-acid chain; its full sequence is Alkanesulfonate monooxygenase (382 aa).

Belongs to the SsuD family.

The enzyme catalyses an alkanesulfonate + FMNH2 + O2 = an aldehyde + FMN + sulfite + H2O + 2 H(+). Catalyzes the desulfonation of aliphatic sulfonates. The polypeptide is Alkanesulfonate monooxygenase (Pseudomonas entomophila (strain L48)).